The primary structure comprises 729 residues: Catalase-peroxidase (729 aa).

The tryptophyl-tyrosyl-methioninium (Trp-Tyr) (with M-244) cross-link spans 95–218; sequence WHSAGTYRGA…LAAVEMGLVY (124 aa). Residue His-96 is the Proton acceptor of the active site. Positions 218-244 form a cross-link, tryptophyl-tyrosyl-methioninium (Tyr-Met) (with W-95); the sequence is YVNPEGPHGHPDPVASGPDVRDTFARM. His-259 provides a ligand contact to heme b.

This sequence belongs to the peroxidase family. Peroxidase/catalase subfamily. Homodimer or homotetramer. Requires heme b as cofactor. Post-translationally, formation of the three residue Trp-Tyr-Met cross-link is important for the catalase, but not the peroxidase activity of the enzyme.

It catalyses the reaction H2O2 + AH2 = A + 2 H2O. It carries out the reaction 2 H2O2 = O2 + 2 H2O. Functionally, bifunctional enzyme with both catalase and broad-spectrum peroxidase activity. This chain is Catalase-peroxidase, found in Synechococcus sp. (strain CC9605).